The chain runs to 541 residues: Protein wntless homolog (541 aa).

The N-terminal stretch at 1 to 42 (MAGAIIENMSTRKLCIVGGILLVFQVIAFLVGGLIAPSPTTA) is a signal peptide. Residues 43 to 232 (VPYMSVKCID…GIHQNGGFTK (190 aa)) lie on the Lumenal side of the membrane. The helical transmembrane segment at 233 to 253 (VWFAMKTFLTPSILIIMVWYW) threads the bilayer. The Cytoplasmic segment spans residues 254–268 (RRITLMTRAPVLLEK). Residues 269 to 289 (VIFALGISMTFINIPVEWFSI) form a helical membrane-spanning segment. The Lumenal segment spans residues 290-303 (GFDWTWMLLFGDIR). Residues 304–324 (QGIFYAMLLSFWIIFCGEHMM) traverse the membrane as a helical segment. At 325 to 331 (DQNERNR) the chain is on the cytoplasmic side. A helical membrane pass occupies residues 332-352 (LSGYWKQVGPIAVGSFCLFIF). The Lumenal portion of the chain corresponds to 353–380 (DMCERGVQLKNPFYSIWTTEVGTELAMA). A helical transmembrane segment spans residues 381–401 (FIIVAGICLCLYFLFLCFMVF). The Cytoplasmic portion of the chain corresponds to 402 to 431 (QVFRNISGKQSSLPAMSKARRLHYEGLIFR). The helical transmembrane segment at 432–452 (FKFLMLITLACAAMTVIFFIV) threads the bilayer. The Lumenal segment spans residues 453–471 (SQVTEGHWKWGDITIQVNS). Residues 472–492 (AFFTGIYGMWNLYVFALMFLY) traverse the membrane as a helical segment. Residues 493–541 (APSHKNYGEDQSNGDLGVSSGEELQLTTTITHVDGPTEVYKLARKEAQE) are Cytoplasmic-facing.

It belongs to the wntless family.

It localises to the golgi apparatus membrane. Its subcellular location is the cytoplasmic vesicle membrane. May play an essential role in Wnt signaling pathway. May be required for Wnt-dependent patterning processes. The chain is Protein wntless homolog (WLS) from Gallus gallus (Chicken).